We begin with the raw amino-acid sequence, 552 residues long: Chaperonin GroEL (552 aa).

ATP contacts are provided by residues 30–33 (TLGP), K51, 87–91 (DGTTT), G415, 480–482 (NAA), and D496.

The protein belongs to the chaperonin (HSP60) family. As to quaternary structure, forms a cylinder of 14 subunits composed of two heptameric rings stacked back-to-back. Interacts with the co-chaperonin GroES.

The protein resides in the cytoplasm. It catalyses the reaction ATP + H2O + a folded polypeptide = ADP + phosphate + an unfolded polypeptide.. In terms of biological role, together with its co-chaperonin GroES, plays an essential role in assisting protein folding. The GroEL-GroES system forms a nano-cage that allows encapsulation of the non-native substrate proteins and provides a physical environment optimized to promote and accelerate protein folding. In Verminephrobacter eiseniae (strain EF01-2), this protein is Chaperonin GroEL.